We begin with the raw amino-acid sequence, 723 residues long: Probable inactive serine/threonine-protein kinase fnkD (723 aa).

Residues 33 to 276 form the Protein kinase domain; it reads WEIITQLESN…TTSLPKYSTL (244 aa). FNIP repeat units follow at residues 301–342, 343–384, 385–426, 524–565, 566–606, and 647–690; these read FNQP…ELAS, FNQT…LLSS, FNQP…SLAS, FNQS…ILPS, FNHP…LGDE, and FNIE…FGIT.

Belongs to the protein kinase superfamily. STE Ser/Thr protein kinase family.

The protein is Probable inactive serine/threonine-protein kinase fnkD (fnkD-1) of Dictyostelium discoideum (Social amoeba).